The chain runs to 585 residues: Zinc finger protein 496 (585 aa).

Positions 1–41 (MPTALCPRVLAPKESEEPRKMRSPPGENPSPQGEPPSPESS) are disordered. Residues 11–20 (APKESEEPRK) are compositionally biased toward basic and acidic residues. K13 participates in a covalent cross-link: Glycyl lysine isopeptide (Lys-Gly) (interchain with G-Cter in SUMO2). Positions 26–38 (GENPSPQGEPPSP) are enriched in pro residues. The SCAN box domain maps to 42–124 (RRLFRRFRYQ…AAVEALEREP (83 aa)). Residues 141–167 (DDGDGPAAPQDLEQERMSAESQSYPDA) are disordered. The residue at position 182 (S182) is a Phosphoserine. Residues 220-294 (SPFKDMILCF…DLQDKEIPQA (75 aa)) form the KRAB domain. The tract at residues 358–397 (SSSGDEDSQHSPYCTEELRSPPEDLHSVPAHQSNASAEGE) is disordered. The segment covering 373–383 (EELRSPPEDLH) has biased composition (basic and acidic residues). Residues 387-397 (AHQSNASAEGE) show a composition bias toward polar residues. The C2H2-type 1; degenerate zinc finger occupies 405 to 427 (YVCPNCGKIFRWRVNFIRHLRSR). 2 consecutive C2H2-type zinc fingers follow at residues 433-455 (HKCS…LETH) and 461-483 (YRCT…RRIH). The interval 483–506 (HLQPASQQPMKKSEEEALETEGTG) is disordered. K494 participates in a covalent cross-link: Glycyl lysine isopeptide (Lys-Gly) (interchain with G-Cter in SUMO2). 2 C2H2-type zinc fingers span residues 520–543 (FQCG…RHCH) and 551–573 (FQCR…ERLH). The short motif at 575-579 (KRRSK) is the Nuclear localization signal element.

This sequence belongs to the krueppel C2H2-type zinc-finger protein family. In terms of assembly, interacts (via zinc-fingers) with JARID2. Interacts with NSD1.

It localises to the nucleus. In terms of biological role, DNA-binding transcription factor that can both act as an activator and a repressor. This is Zinc finger protein 496 (Znf496) from Mus musculus (Mouse).